Reading from the N-terminus, the 200-residue chain is Imidazoleglycerol-phosphate dehydratase (200 aa).

The protein belongs to the imidazoleglycerol-phosphate dehydratase family.

The protein resides in the cytoplasm. It carries out the reaction D-erythro-1-(imidazol-4-yl)glycerol 3-phosphate = 3-(imidazol-4-yl)-2-oxopropyl phosphate + H2O. Its pathway is amino-acid biosynthesis; L-histidine biosynthesis; L-histidine from 5-phospho-alpha-D-ribose 1-diphosphate: step 6/9. The protein is Imidazoleglycerol-phosphate dehydratase of Renibacterium salmoninarum (strain ATCC 33209 / DSM 20767 / JCM 11484 / NBRC 15589 / NCIMB 2235).